A 306-amino-acid polypeptide reads, in one-letter code: tRNA pseudouridine synthase B (306 aa).

Aspartate 48 (nucleophile) is an active-site residue.

It belongs to the pseudouridine synthase TruB family. Type 1 subfamily.

It catalyses the reaction uridine(55) in tRNA = pseudouridine(55) in tRNA. Responsible for synthesis of pseudouridine from uracil-55 in the psi GC loop of transfer RNAs. This chain is tRNA pseudouridine synthase B, found in Chromobacterium violaceum (strain ATCC 12472 / DSM 30191 / JCM 1249 / CCUG 213 / NBRC 12614 / NCIMB 9131 / NCTC 9757 / MK).